The chain runs to 153 residues: Myosin regulatory light chain (153 aa).

Ala1 bears the Blocked amino end (Ala) mark. EF-hand domains are found at residues 15–50 (KQIQ…LGRT) and 81–116 (DSEE…MGNN). Asp28, Asp30, Asp32, and Asp39 together coordinate Ca(2+).

Its function is as follows. In molluscan muscle, calcium regulation is associated with myosin rather than with actin. Muscle myosin contains two types of light chains: the catalytic light chain, essential for ATPase activity, and the regulatory light chain, a calcium-binding protein responsible for Ca(2+) dependent binding and Ca(2+) dependent Mg-ATPase activity. In Patinopecten sp. (Scallop), this protein is Myosin regulatory light chain.